The following is a 407-amino-acid chain: Chorismate synthase (407 aa).

NADP(+)-binding residues include arginine 40 and arginine 46. Residues arginine 135 to serine 137, glutamine 256 to alanine 257, glycine 300, lysine 315 to threonine 319, and arginine 341 each bind FMN.

It belongs to the chorismate synthase family. As to quaternary structure, homotetramer. FMNH2 is required as a cofactor.

It catalyses the reaction 5-O-(1-carboxyvinyl)-3-phosphoshikimate = chorismate + phosphate. Its pathway is metabolic intermediate biosynthesis; chorismate biosynthesis; chorismate from D-erythrose 4-phosphate and phosphoenolpyruvate: step 7/7. In terms of biological role, catalyzes the anti-1,4-elimination of the C-3 phosphate and the C-6 proR hydrogen from 5-enolpyruvylshikimate-3-phosphate (EPSP) to yield chorismate, which is the branch point compound that serves as the starting substrate for the three terminal pathways of aromatic amino acid biosynthesis. This reaction introduces a second double bond into the aromatic ring system. In Mycobacterium leprae (strain Br4923), this protein is Chorismate synthase.